A 210-amino-acid polypeptide reads, in one-letter code: MSKIAIVDYGMCNLWSIKSAIQFIGYDSILTSDPKDILNSSAIILPGVGSFKTGMDNLLSLGLSQAIIDACMFRSIPILGICLGFQLLCCSSEEPSYTKGLSLLPIQIVPLCRHIDASFVLPHVGFTSVYTSKNDPLFKNIANKSDFYFVHSYGAFNVPHDFTTYSYCNYDAKIISSANVNHIMGVQFHPEKSQTNGLILLDNFLSFSNV.

The region spanning 3 to 210 is the Glutamine amidotransferase type-1 domain; it reads KIAIVDYGMC…LDNFLSFSNV (208 aa). Residue Cys82 is the Nucleophile of the active site. Active-site residues include His189 and Glu191.

In terms of assembly, heterodimer of HisH and HisF.

It is found in the cytoplasm. It carries out the reaction 5-[(5-phospho-1-deoxy-D-ribulos-1-ylimino)methylamino]-1-(5-phospho-beta-D-ribosyl)imidazole-4-carboxamide + L-glutamine = D-erythro-1-(imidazol-4-yl)glycerol 3-phosphate + 5-amino-1-(5-phospho-beta-D-ribosyl)imidazole-4-carboxamide + L-glutamate + H(+). It catalyses the reaction L-glutamine + H2O = L-glutamate + NH4(+). The protein operates within amino-acid biosynthesis; L-histidine biosynthesis; L-histidine from 5-phospho-alpha-D-ribose 1-diphosphate: step 5/9. IGPS catalyzes the conversion of PRFAR and glutamine to IGP, AICAR and glutamate. The HisH subunit provides the glutamine amidotransferase activity that produces the ammonia necessary to HisF for the synthesis of IGP and AICAR. The sequence is that of Imidazole glycerol phosphate synthase subunit HisH 1 (hisH1) from Parasynechococcus marenigrum (strain WH8102).